We begin with the raw amino-acid sequence, 317 residues long: Insulin-like growth factor-binding protein 2 (317 aa).

The first 33 residues, 1–33 (MQPRLGGPALLLLPPLLLLLLLGAGGGDCGARA), serve as a signal peptide directing secretion. An IGFBP N-terminal domain is found at 35-126 (VLFRCPPCTP…VHGEGTCEKH (92 aa)). Intrachain disulfides connect C39/C76, C42/C78, C50/C79, C68/C82, C90/C103, and C97/C123. Disordered regions lie at residues 126–146 (HGDAEYSASPEQVADNGEEHS) and 190–218 (QHRQMGKGGKHHLGLEEPKKLRPPPARTP). The 83-residue stretch at 216-298 (RTPCQQELDQ…APTIRGDPEC (83 aa)) folds into the Thyroglobulin type-1 domain. 3 disulfide bridges follow: C219–C253, C264–C275, and C277–C298. The short motif at 293–295 (RGD) is the Cell attachment site element.

Interacts with IGF1. Interacts with IGF2. Interacts (via RGD motif) with integrin alpha5/ITGA5; this interaction induces cell migration, adhesion or apoptosis according to the context. Interacts with PTPRB; this interaction leads to PTPRB dimerization and inactivation. Cleaved by MMP9 leading to release of free IGF2 from IGFBP2-IGF2 complex, which contributes to enhance the motility and the growth of astrocytes. Post-translationally, O-glycosylated.

The protein resides in the secreted. Functionally, multifunctional protein that plays a critical role in regulating the availability of IGFs such as IGF1 and IGF2 to their receptors and thereby regulates IGF-mediated cellular processes including proliferation, differentiation, and apoptosis in a cell-type specific manner. Functions coordinately with receptor protein tyrosine phosphatase beta/PTPRB and the IGF1 receptor to regulate IGF1-mediated signaling by stimulating the phosphorylation of PTEN leading to its inactivation and AKT1 activation. Plays a positive role in cell migration via interaction with integrin alpha5/ITGA5 through an RGD motif. Additionally, interaction with ITGA5/ITGB1 enhances the adhesion of endothelial progenitor cells to endothelial cells. Upon mitochondrial damage, facilitates apoptosis with ITGA5 of podocytes, and then activates the phosphorylation of focal adhesion kinase (FAK)-mediated mitochondrial injury. The chain is Insulin-like growth factor-binding protein 2 (IGFBP2) from Bos taurus (Bovine).